A 68-amino-acid chain; its full sequence is U-reduvitoxin-Pr3a (68 aa).

The first 22 residues, 1 to 22, serve as a signal peptide directing secretion; it reads MKAGMKLVLVLVIASIALLALA. Intrachain disulfides connect C29–C47, C36–C52, and C46–C59.

This sequence belongs to the venom Ptu1-like knottin family. As to expression, expressed by the venom gland.

Its subcellular location is the secreted. Its function is as follows. Binds reversibly and blocks P/Q-type voltage-gated calcium channels (Cav). This is U-reduvitoxin-Pr3a from Platymeris rhadamanthus (Red spot assassin bug).